Consider the following 348-residue polypeptide: 3',5'-cyclic-nucleotide phosphodiesterase (348 aa).

Mn(2+) is required as a cofactor.

The catalysed reaction is a nucleoside 3',5'-cyclic phosphate + H2O = a nucleoside 5'-phosphate + H(+). In terms of biological role, hydrolyzes cAMP to 5'-AMP and cGMP to 5'-GMP. Does not show phosphohydrolase activity toward various phosphatidylcholine and phosphorylated sugars. The chain is 3',5'-cyclic-nucleotide phosphodiesterase from Helicobacter pylori (strain ATCC 700392 / 26695) (Campylobacter pylori).